The following is a 1152-amino-acid chain: MSIRFIYGRAGSGKSLFCINQIKKLIDSDKEKKIILLVPEQYTFTTENKVLNYIGERAFLNTHVLSFRTMCQKVFEECGGRVKQIIKDTGKHMLINKVLNEKIDDLSYFKKMSREQGFNNIISELITEFKKYNINIDALRDLTDKIDDNELVEKIRELSLIYEEFNVKMHSSYIDTDDELTLLAKKLLANNIYANSEIWIDEFTTFTPQQLEIIRILSKASVVNITLCMDKIENSDVEDITNVFSSIENTENRLLKLMEENNIGYLNPINLNSKLPYRFKNSEELSHIEKYCITYPFKSYKGKNKDVRLYKANNTYDEIEKVAKDIIRLVRDRNYRFRDISVVCRNIENYNKIISVIFNDYEIPFFMDQKIKLLNNPLIVLITSAFEVVLKNWSYESVFKYLKSGLTGFNIYDIDRLENFVLEHGIKSYKWNEEEIEKLKNIKIENGATEDELTIFNLMEEVRNSLISFHKLIEGKHYVRDICKALYEFLLSIKAFERIDEWIIKFEELKLEDKVKEYKQVESIVIDMLDQAVEVMGSDVVDTFEFFKILNSGFENEEIGVIPVALDQVNVGDIARIKGREVKALYIVGINDGILPAAHKDEGILSDRDRIELKEFGIVLAADGRSKAFEEQFVVYTALTIASEYLMLSYPMADFEGKSLRPSIIISRIKKILPNLVEESSLYDLSKRSDHFNKVISPIPTFNELIFALRRELEDEDIDEEYWGEVYNWFKENEDFKWKIENTFKGLRYSNTGEKVSRNKLLSLYKNDLGKLSFSVSRLEKYAECPFSYFIQYGLKAKNRKVYEFTPPDLGSFVHDILDSFTNKVKKEKIAWSDLDMIKCKNIVSELIDTKLKEDSGSILNSTNKYKYFSKRFKRVISKSVSVISEQMRRGEFEVFNNEFSFGSYNDGEAIVLELPSNEKVYLNGRIDRIDTLDLEGSTYLRIVDYKTGNKHFDLNQFYYGLQMQLLVYLDALIKNSEYILKKQALPGAVLYFKVDDPIIKTKGDITTEELEKEVLSNLKMNGLILKDAKVVKAMDRGIETDGYSLVIPAALKKDGDFKAGSEVVTEEQFTLLREYVNKKMIDLCEDMLCGDIKIQPTKDSDGSHCEFCDFSSICQFDSSIEDNKYKIIMKKSKDEIWNNIRDELNDDKKEN.

Residues 1–338 (MSIRFIYGRA…LVRDRNYRFR (338 aa)) enclose the UvrD-like helicase ATP-binding domain. Residue 8–15 (GRAGSGKS) coordinates ATP. The 304-residue stretch at 276 to 579 (PYRFKNSEEL…NVGDIARIKG (304 aa)) folds into the UvrD-like helicase C-terminal domain. [4Fe-4S] cluster-binding residues include Cys-785, Cys-1106, Cys-1109, and Cys-1115.

Belongs to the helicase family. AddB/RexB type 1 subfamily. Heterodimer of AddA and AddB. Requires Mg(2+) as cofactor. [4Fe-4S] cluster serves as cofactor.

Its function is as follows. The heterodimer acts as both an ATP-dependent DNA helicase and an ATP-dependent, dual-direction single-stranded exonuclease. Recognizes the chi site generating a DNA molecule suitable for the initiation of homologous recombination. The AddB subunit has 5' -&gt; 3' nuclease activity but not helicase activity. This chain is ATP-dependent helicase/deoxyribonuclease subunit B, found in Clostridium botulinum (strain Alaska E43 / Type E3).